The primary structure comprises 177 residues: B9 domain-containing protein 2 (177 aa).

Positions 2–118 (AEVHIIGQIL…EIGTWKVAPN (117 aa)) constitute a C2 B9-type domain.

This sequence belongs to the B9D family. In terms of assembly, probable component of the tectonic-like complex (also named MKS complex), composed of B9d1, B9d2, Cc2d2a, Mks1 and tctn. Expressed in chordotonal neurons in the antennae (at protein level). Expressed in spermatids (at protein level).

It is found in the cytoplasm. The protein localises to the cytoskeleton. It localises to the cilium basal body. Its function is as follows. Probable component of the tectonic-like complex (also named MKS complex), a complex localized at the transition zone of primary cilia. Has a role in ciliary structure and function. The sequence is that of B9 domain-containing protein 2 from Drosophila melanogaster (Fruit fly).